We begin with the raw amino-acid sequence, 165 residues long: LOB domain-containing protein 3 (165 aa).

In terms of domain architecture, LOB spans 13–115; it reads SPCAGCKLLR…TQLAFAQAEL (103 aa).

It belongs to the LOB domain-containing protein family. In terms of tissue distribution, expressed in young shoots, roots, stems, leaves and flowers. At the bases of lateral organs formed from vegetative, inflorescence, and floral meristems.

Its subcellular location is the nucleus. The polypeptide is LOB domain-containing protein 3 (LBD3) (Arabidopsis thaliana (Mouse-ear cress)).